Consider the following 119-residue polypeptide: NADH-quinone oxidoreductase subunit A (119 aa).

The next 3 membrane-spanning stretches (helical) occupy residues 7–27 (FPVL…MSIG), 63–83 (LIAI…PWGV), and 88–108 (IGWP…VGFV).

Belongs to the complex I subunit 3 family. As to quaternary structure, NDH-1 is composed of 14 different subunits. Subunits NuoA, H, J, K, L, M, N constitute the membrane sector of the complex.

The protein resides in the cell inner membrane. The enzyme catalyses a quinone + NADH + 5 H(+)(in) = a quinol + NAD(+) + 4 H(+)(out). Its function is as follows. NDH-1 shuttles electrons from NADH, via FMN and iron-sulfur (Fe-S) centers, to quinones in the respiratory chain. The immediate electron acceptor for the enzyme in this species is believed to be ubiquinone. Couples the redox reaction to proton translocation (for every two electrons transferred, four hydrogen ions are translocated across the cytoplasmic membrane), and thus conserves the redox energy in a proton gradient. In Cupriavidus pinatubonensis (strain JMP 134 / LMG 1197) (Cupriavidus necator (strain JMP 134)), this protein is NADH-quinone oxidoreductase subunit A.